A 181-amino-acid polypeptide reads, in one-letter code: Protein Ves (181 aa).

It belongs to the Ves family.

The sequence is that of Protein Ves from Cronobacter sakazakii (strain ATCC BAA-894) (Enterobacter sakazakii).